Here is a 1012-residue protein sequence, read N- to C-terminus: Ankyrin repeat- and BTB/POZ domain-containing protein 3-B (1012 aa).

The chain crosses the membrane as a helical span at residues 160-180 (ILSWTISVNCIAASLSALSMY). ANK repeat units follow at residues 511 to 540 (QGMT…DINS), 557 to 586 (RQAT…NVEG), and 595 to 624 (YTET…DPMI). Positions 831–897 (SDVTFLVEGK…LYCGGTDALH (67 aa)) constitute a BTB domain.

It is found in the membrane. This is Ankyrin repeat- and BTB/POZ domain-containing protein 3-B (abtb3b) from Danio rerio (Zebrafish).